The sequence spans 492 residues: MDTTKQNVKTLKNFINGKWVDAKTETFENVYNPATGDVLARVPHSTSEDVADAVTAAKEAFKIWQKVSIPKRAKILFKYQQLLVEHQEELGRIVTEENGKSLDEAVAEVGRGIENVEFAAGVPTLMMGDSLSSVATDVEATNYRYPIGVVGGITPFNFPMMVPCWMFPMAVATGNTFILKPSEKTPLTSQRLVELFQEAGLPDGVLNIVNGAVDVVNGILDHPDIKAISFVGSERVGEYVYKRGSDHLKRVQALTGAKNHTIVLADADLDAAVKGIISSSFGSAGERCMATSVLVLQDEIADKFMAKFTQAAKDIKIGNGLDKGVFLGPVIRKENQERTLNYIQTGVKEGAKLVLDGSAEAKKHDGYFVGPTIFEDVKTDMTIWHDEMFAPVLSVIRAKDLPQAVAIANTSELANGACLFTDSAASIRYFRENIDAGMLGINLGVPAPIAVFPFSGWKHSFFGTLHANGKDSVDFYTHKKVVTARYDQRRFK.

NAD(+) contacts are provided by Phe156, Lys180, Glu183, Lys184, Ser233, and Thr255. Cys288 (nucleophile) is an active-site residue. Glu387 serves as a coordination point for NAD(+).

The protein belongs to the aldehyde dehydrogenase family. IolA subfamily. As to quaternary structure, homotetramer.

It catalyses the reaction 3-oxopropanoate + NAD(+) + CoA + H2O = hydrogencarbonate + acetyl-CoA + NADH + H(+). It carries out the reaction 2-methyl-3-oxopropanoate + NAD(+) + CoA + H2O = propanoyl-CoA + hydrogencarbonate + NADH + H(+). The protein operates within polyol metabolism; myo-inositol degradation into acetyl-CoA; acetyl-CoA from myo-inositol: step 7/7. In terms of biological role, catalyzes the oxidation of malonate semialdehyde (MSA) and methylmalonate semialdehyde (MMSA) into acetyl-CoA and propanoyl-CoA, respectively. Is involved in a myo-inositol catabolic pathway. Bicarbonate, and not CO2, is the end-product of the enzymatic reaction. The polypeptide is Malonate-semialdehyde dehydrogenase (Lacticaseibacillus casei (Lactobacillus casei)).